The sequence spans 495 residues: Serine/threonine-protein phosphatase 2A regulatory subunit sur-6 (495 aa).

The interval 1–27 (MVMEVDEPAVAATTSQNQPQEHANDFD) is disordered. Residues 12-21 (ATTSQNQPQE) are compositionally biased toward polar residues. WD repeat units lie at residues 64–103 (TEADVISCVEFSHDGEYLATGDKGGRVVIFQRDQSGKYVK), 130–171 (EIDE…RKIG), 215–253 (AHTYHVNSISVNSDQETFLSADDLRVNLWNLEITNESFN), 264–304 (ELTE…LCDA), 323–361 (EIIASVSDVKFSHNGRYLLTRDYLTVKVWDLNMESQPVE), and 378–419 (ENDS…DAKT). The segment at 439 to 459 (SAKRKRNNLSSSGETTEEDLS) is disordered. The WD 7 repeat unit spans residues 464-495 (QFDRKILHTAWHPKDNIIALAATNNLYIFSDV).

The protein belongs to the phosphatase 2A regulatory subunit B family. As to quaternary structure, part of a complex consisting of a common heterodimeric core enzyme, composed of catalytic subunit let-92 and constant regulatory subunit paa-1, that associates with a variety of regulatory subunits which confer distinct properties to the holoenzyme. Interacts with let-92.

Its subcellular location is the cytoplasm. In terms of biological role, probable regulatory subunit of serine/threonine phosphatase let-92. Together with let-92 and constant regulatory subunit paa-1, positively regulates centriole duplication during early embryonic cell divisions by preventing the degradation of sas-5 and kinase zyg-1. In addition, during vulva development, may play a role with phosphatase let-92 and regulatory subunit paa-1 in the induction of vulva cell precursors by positively regulating let-60/Ras-MAP kinase signaling, probably by promoting lin-45 activation. In intestinal epithelial cells, may play a role in the late secretory pathway probably by regulating the exocyst, a protein complex involved in targeting secretory vesicles to the plasma membrane. This is Serine/threonine-protein phosphatase 2A regulatory subunit sur-6 from Caenorhabditis elegans.